Reading from the N-terminus, the 309-residue chain is General transcription factor IIH subunit 3 (309 aa).

The C4-type zinc-finger motif lies at 269–286 (CSVCLSIFCNFSPICTTC).

The protein belongs to the TFB4 family. Part of a TFIID-containing RNA polymerase II pre-initiation complex that is composed of TBP and at least GTF2A1, GTF2A2, GTF2E1, GTF2E2, GTF2F1, GTF2H2, GTF2H3, GTF2H4, GTF2H5, GTF2B, TCEA1, ERCC2, ERCC3, TAF1, TAF2, TAF3, TAF4, TAF5, TAF6, TAF7, TAF8, TAF9, TAF10, TAF11, TAF12 and TAF13. Component of the 7-subunit TFIIH core complex composed of XPB/ERCC3, XPD/ERCC2, GTF2H1, GTF2H2, GTF2H3, GTF2H4 and GTF2H5, which is active in NER. The core complex associates with the 3-subunit CDK-activating kinase (CAK) module composed of CCNH/cyclin H, CDK7 and MNAT1 to form the 10-subunit holoenzyme (holo-TFIIH) active in transcription. Interacts with RARA; the interaction requires prior phosphorylation of RARA on 'Ser-369' which then enhances interaction of RARA with CDK7.

The protein localises to the nucleus. Its function is as follows. Component of the general transcription and DNA repair factor IIH (TFIIH) core complex, which is involved in general and transcription-coupled nucleotide excision repair (NER) of damaged DNA and, when complexed to CAK, in RNA transcription by RNA polymerase II. In NER, TFIIH acts by opening DNA around the lesion to allow the excision of the damaged oligonucleotide and its replacement by a new DNA fragment. In transcription, TFIIH has an essential role in transcription initiation. When the pre-initiation complex (PIC) has been established, TFIIH is required for promoter opening and promoter escape. Phosphorylation of the C-terminal tail (CTD) of the largest subunit of RNA polymerase II by the kinase module CAK controls the initiation of transcription. This is General transcription factor IIH subunit 3 (GTF2H3) from Bos taurus (Bovine).